The following is a 421-amino-acid chain: Serine hydroxymethyltransferase (421 aa).

(6S)-5,6,7,8-tetrahydrofolate contacts are provided by residues L121 and G125 to L127. K229 carries the post-translational modification N6-(pyridoxal phosphate)lysine.

It belongs to the SHMT family. As to quaternary structure, homodimer. Requires pyridoxal 5'-phosphate as cofactor.

It localises to the cytoplasm. It carries out the reaction (6R)-5,10-methylene-5,6,7,8-tetrahydrofolate + glycine + H2O = (6S)-5,6,7,8-tetrahydrofolate + L-serine. Its pathway is one-carbon metabolism; tetrahydrofolate interconversion. It functions in the pathway amino-acid biosynthesis; glycine biosynthesis; glycine from L-serine: step 1/1. Its function is as follows. Catalyzes the reversible interconversion of serine and glycine with tetrahydrofolate (THF) serving as the one-carbon carrier. This reaction serves as the major source of one-carbon groups required for the biosynthesis of purines, thymidylate, methionine, and other important biomolecules. Also exhibits THF-independent aldolase activity toward beta-hydroxyamino acids, producing glycine and aldehydes, via a retro-aldol mechanism. The polypeptide is Serine hydroxymethyltransferase (Haemophilus influenzae (strain ATCC 51907 / DSM 11121 / KW20 / Rd)).